Consider the following 251-residue polypeptide: MNKHERLDEIAKLVNKKGTIRTNEIVEGLNVSDMTVRRDLIELENKGILTKIHGGARSNSTFQYKEISHKEKHTRQIAEKRFIARKAASLIEDGDTLFFGPGTTVELLAEEVNHHTLTIITNCLPVYKILLEKQTAHFRVYLIGGEMRHITEAFVGEMANAMLEKLRFSKMFFSSNAVNKGAVMTSTLDEAYTQQLALSNSIEKYLLIDHTKVGKEDFTSFCQLNELTAVVMDYEDEEKVETIKTYIEVVD.

Positions 3-58 (KHERLDEIAKLVNKKGTIRTNEIVEGLNVSDMTVRRDLIELENKGILTKIHGGARS) constitute an HTH deoR-type domain. Residues 20–39 (IRTNEIVEGLNVSDMTVRRD) constitute a DNA-binding region (H-T-H motif).

In terms of biological role, repressor of the lactose catabolism operon. Galactose-6-phosphate is the inducer. This chain is Lactose phosphotransferase system repressor (lacR), found in Staphylococcus aureus (strain MRSA252).